We begin with the raw amino-acid sequence, 529 residues long: UPF0159 protein TC_0921 (529 aa).

ThyX domains are found at residues 38-274 (KGAL…AEPH) and 309-511 (KGVK…LKFV).

The protein belongs to the UPF0159 family.

This chain is UPF0159 protein TC_0921, found in Chlamydia muridarum (strain MoPn / Nigg).